Reading from the N-terminus, the 408-residue chain is Aspartate aminotransferase (408 aa).

L-aspartate is bound by residues G45, W134, and N184. N6-(pyridoxal phosphate)lysine is present on K247. R382 lines the L-aspartate pocket.

This sequence belongs to the class-I pyridoxal-phosphate-dependent aminotransferase family. In terms of assembly, homodimer. It depends on pyridoxal 5'-phosphate as a cofactor.

It localises to the cytoplasm. The enzyme catalyses L-aspartate + 2-oxoglutarate = oxaloacetate + L-glutamate. Its function is as follows. Catalyzes the reversible conversion of aspartate and 2-oxoglutarate to glutamate and oxaloacetate. Does not have prephenate aminotransferase activity. The sequence is that of Aspartate aminotransferase from Streptomyces avermitilis (strain ATCC 31267 / DSM 46492 / JCM 5070 / NBRC 14893 / NCIMB 12804 / NRRL 8165 / MA-4680).